Reading from the N-terminus, the 244-residue chain is Serine-rich single-pass membrane protein 1 (244 aa).

The chain crosses the membrane as a helical span at residues 35–55 (CGTIGNFLLWYFVIVFVLMFF). Disordered regions lie at residues 65 to 112 (DKKD…LTPV), 132 to 191 (QSQF…LGSY), and 213 to 244 (HSQQKASVTPPMKGDSPEESSISDINTKFSKF). Basic and acidic residues predominate over residues 80–94 (ASKETSYKWQSKDGA). Composition is skewed to polar residues over residues 97–112 (PSQTMKKPKQNQLTPV) and 132–142 (QSQFNEVNQNQ). Positions 161–176 (SWKESESEHHPSPDSI) are enriched in basic and acidic residues. A compositionally biased stretch (polar residues) spans 231–244 (ESSISDINTKFSKF).

It is found in the membrane. This is Serine-rich single-pass membrane protein 1 (SSMEM1) from Macaca fascicularis (Crab-eating macaque).